Reading from the N-terminus, the 330-residue chain is ADP-L-glycero-D-manno-heptose-6-epimerase (330 aa).

NADP(+) is bound by residues 11-12, 32-33, glutamine 39, glutamine 54, 75-79, and asparagine 92; these read FI, DD, and QGACA. Catalysis depends on tyrosine 139, which acts as the Proton acceptor. Residue lysine 143 coordinates NADP(+). Residue asparagine 168 coordinates substrate. NADP(+) is bound by residues valine 169 and lysine 177. Catalysis depends on lysine 177, which acts as the Proton acceptor. Substrate contacts are provided by residues arginine 179, histidine 186, 200 to 203, arginine 213, and tyrosine 292; that span reads FGEH.

This sequence belongs to the NAD(P)-dependent epimerase/dehydratase family. HldD subfamily. As to quaternary structure, homopentamer. It depends on NADP(+) as a cofactor.

It carries out the reaction ADP-D-glycero-beta-D-manno-heptose = ADP-L-glycero-beta-D-manno-heptose. Its pathway is nucleotide-sugar biosynthesis; ADP-L-glycero-beta-D-manno-heptose biosynthesis; ADP-L-glycero-beta-D-manno-heptose from D-glycero-beta-D-manno-heptose 7-phosphate: step 4/4. Its function is as follows. Catalyzes the interconversion between ADP-D-glycero-beta-D-manno-heptose and ADP-L-glycero-beta-D-manno-heptose via an epimerization at carbon 6 of the heptose. The chain is ADP-L-glycero-D-manno-heptose-6-epimerase from Pseudomonas paraeruginosa (strain DSM 24068 / PA7) (Pseudomonas aeruginosa (strain PA7)).